The following is a 376-amino-acid chain: DNA polymerase IV (376 aa).

The 182-residue stretch at 6 to 187 (IIHIDMDAFF…LSIGKFYGVG (182 aa)) folds into the UmuC domain. Residues D10 and D105 each contribute to the Mg(2+) site. Residue E106 is part of the active site.

The protein belongs to the DNA polymerase type-Y family. As to quaternary structure, monomer. The cofactor is Mg(2+).

The protein localises to the cytoplasm. It catalyses the reaction DNA(n) + a 2'-deoxyribonucleoside 5'-triphosphate = DNA(n+1) + diphosphate. Poorly processive, error-prone DNA polymerase involved in untargeted mutagenesis. Copies undamaged DNA at stalled replication forks, which arise in vivo from mismatched or misaligned primer ends. These misaligned primers can be extended by PolIV. Exhibits no 3'-5' exonuclease (proofreading) activity. May be involved in translesional synthesis, in conjunction with the beta clamp from PolIII. The sequence is that of DNA polymerase IV from Desulfotalea psychrophila (strain LSv54 / DSM 12343).